We begin with the raw amino-acid sequence, 418 residues long: Protein FAM53A (418 aa).

2 disordered regions span residues 198–236 (TSPV…FNPR) and 248–269 (ETGN…LSRR). Residues 205–229 (SSASSGFVDSSEGSTSSSTRWNSGG) show a composition bias toward low complexity. Positions 248 to 265 (ETGNLLPSANSTPTSTPE) are enriched in polar residues. The short motif at 285-293 (KKSRLKRRR) is the Nuclear localization signal element.

The protein belongs to the FAM53 family.

It localises to the nucleus. Functionally, may play an important role in neural development; the dorsomedial roof of the third ventricle. This is Protein FAM53A from Gallus gallus (Chicken).